The chain runs to 427 residues: UPF0761 membrane protein Cphamn1_1013 (427 aa).

The next 6 helical transmembrane spans lie at 51–71 (LLSL…SPVF), 107–127 (TVPT…ISTI), 147–167 (FTLY…GLVA), 188–208 (ILSY…YMLV), 218–238 (AVSG…WFSF), and 251–271 (GALS…VVAL).

Belongs to the UPF0761 family.

The protein resides in the cell inner membrane. This Chlorobium phaeobacteroides (strain BS1) protein is UPF0761 membrane protein Cphamn1_1013.